An 800-amino-acid chain; its full sequence is Phenylalanine--tRNA ligase beta subunit (800 aa).

The tRNA-binding domain occupies 39–147 (FDAIADIVVG…QDSVPGVRLV (109 aa)). One can recognise a B5 domain in the interval 401–477 (WQAAQLRFRP…RVYGMDNIPP (77 aa)). Mg(2+) contacts are provided by aspartate 455, aspartate 461, glutamate 464, and glutamate 465. The FDX-ACB domain maps to 706-800 (PVFPPVKRDI…SLTEALGVRI (95 aa)).

This sequence belongs to the phenylalanyl-tRNA synthetase beta subunit family. Type 1 subfamily. Tetramer of two alpha and two beta subunits. Mg(2+) is required as a cofactor.

Its subcellular location is the cytoplasm. It carries out the reaction tRNA(Phe) + L-phenylalanine + ATP = L-phenylalanyl-tRNA(Phe) + AMP + diphosphate + H(+). This is Phenylalanine--tRNA ligase beta subunit from Oleidesulfovibrio alaskensis (strain ATCC BAA-1058 / DSM 17464 / G20) (Desulfovibrio alaskensis).